The primary structure comprises 123 residues: Small ribosomal subunit protein uS13 (123 aa).

Residues 95–123 (GLPVRGQKTKTNARTRKGPKRAISGKKNK) are disordered.

This sequence belongs to the universal ribosomal protein uS13 family. As to quaternary structure, part of the 30S ribosomal subunit. Forms a loose heterodimer with protein S19. Forms two bridges to the 50S subunit in the 70S ribosome.

Its function is as follows. Located at the top of the head of the 30S subunit, it contacts several helices of the 16S rRNA. In the 70S ribosome it contacts the 23S rRNA (bridge B1a) and protein L5 of the 50S subunit (bridge B1b), connecting the 2 subunits; these bridges are implicated in subunit movement. Contacts the tRNAs in the A and P-sites. The protein is Small ribosomal subunit protein uS13 of Clostridium novyi (strain NT).